The primary structure comprises 265 residues: 5'-nucleotidase SurE (265 aa).

Residues aspartate 8, aspartate 9, serine 39, and asparagine 96 each coordinate a divalent metal cation.

This sequence belongs to the SurE nucleotidase family. The cofactor is a divalent metal cation.

The protein resides in the cytoplasm. The enzyme catalyses a ribonucleoside 5'-phosphate + H2O = a ribonucleoside + phosphate. Its function is as follows. Nucleotidase that shows phosphatase activity on nucleoside 5'-monophosphates. This Rubrobacter xylanophilus (strain DSM 9941 / JCM 11954 / NBRC 16129 / PRD-1) protein is 5'-nucleotidase SurE.